Reading from the N-terminus, the 295-residue chain is MADIIDIANPTRTQAILNQYGLHAKKKFGQNFLTDLNVLHGIVDVAGITSEDYVIEIGPGIGALTEQLARSAKKVVAFEIDPHMVAVLAETLLPYDNVKVIENDILKVNLAHVIATEFGEGAHVKIVANLPYYITTPILMQLLRAKISWDNIVVMMQREVADRLNAEIGTKAYGVLTLTIQYYAQAQLAIKVPASAFNPSPNVDSAVVMLTPIVPETVVDNPDKLFSVVKGSFAHRRKSLWNNMLQMFGKQEDVKQRIQDALDSVNIASSIRAERLSLNQLTALYEALKLQGLIK.

Residues Asn-31, Leu-33, Gly-58, Glu-79, Asp-104, and Asn-129 each contribute to the S-adenosyl-L-methionine site.

It belongs to the class I-like SAM-binding methyltransferase superfamily. rRNA adenine N(6)-methyltransferase family. RsmA subfamily.

The protein resides in the cytoplasm. It carries out the reaction adenosine(1518)/adenosine(1519) in 16S rRNA + 4 S-adenosyl-L-methionine = N(6)-dimethyladenosine(1518)/N(6)-dimethyladenosine(1519) in 16S rRNA + 4 S-adenosyl-L-homocysteine + 4 H(+). In terms of biological role, specifically dimethylates two adjacent adenosines (A1518 and A1519) in the loop of a conserved hairpin near the 3'-end of 16S rRNA in the 30S particle. May play a critical role in biogenesis of 30S subunits. This Leuconostoc citreum (strain KM20) protein is Ribosomal RNA small subunit methyltransferase A.